The chain runs to 438 residues: Nucleolar protein 12 (438 aa).

2 disordered regions span residues 1-28 (MGETNSSLDNENTSFVGKLSSSSNVDPT) and 60-94 (ANGVEEAAETIESDTKEVQNIKPKSKKKKKKLNDS). Residues 60 to 71 (ANGVEEAAETIE) are compositionally biased toward acidic residues. Serine 94 and serine 95 each carry phosphoserine. A disordered region spans residues 108-146 (AEEDEEKDKDSAGLINDEEDKSPAKQSVLEERTSQEDVK). Basic and acidic residues predominate over residues 135–146 (VLEERTSQEDVK). RRM domains follow at residues 164 to 262 (KTVF…SVSH) and 270 to 348 (RCVF…RAKS). 2 stretches are compositionally biased toward basic residues: residues 346–357 (AKSTKPKSITRS) and 402–412 (AKKKVNKKRKE). Disordered regions lie at residues 346–366 (AKSTKPKSITRSKRGDEKTRT) and 390–438 (EGHR…KKDK).

The protein belongs to the RRM RBM34 family.

The protein resides in the nucleus. It is found in the nucleolus. Functionally, involved in pre-25S rRNA processing. The sequence is that of Nucleolar protein 12 (nop12) from Schizosaccharomyces pombe (strain 972 / ATCC 24843) (Fission yeast).